The sequence spans 798 residues: Metabotropic glutamate receptor-like protein A (798 aa).

The first 23 residues, 1-23 (MNKLKFLIILFITFLFNLKYINS), serve as a signal peptide directing secretion. Topologically, residues 24–388 (LKQCKISVLL…DYSNSMKLGL (365 aa)) are extracellular. 3 N-linked (GlcNAc...) asparagine glycosylation sites follow: N186, N275, and N320. A helical membrane pass occupies residues 389-409 (TIVSGFCILFCIISMVLVIMF). The Cytoplasmic segment spans residues 410 to 419 (RHAKIIKSAS). Residues 420 to 440 (PIFCLLILFGCIIIFSGCIIF) traverse the membrane as a helical segment. Residues 441-447 (SLSPTDG) are Extracellular-facing. The chain crosses the membrane as a helical span at residues 448-468 (ICGARVWLLSIGYTIFLGSLL). Over 469-494 (VKNWRIWLLFDNPKLKKRSITNWKLY) the chain is Cytoplasmic. Residues 495-515 (PFVAGILAADVLILALWQGLG) form a helical membrane-spanning segment. Over 516-545 (DIRSESRIGIDSLTKYQYANVCSSNDQGSV) the chain is Extracellular. The helical transmembrane segment at 546–566 (ALYILLVFHGIKLLAACFISF) threads the bilayer. At 567-580 (KIKAVDIEEFNESK) the chain is on the cytoplasmic side. A helical membrane pass occupies residues 581-601 (PIASSIYIITFCLFIVIPLMV). Over 602 to 609 (SPQSVASQ) the chain is Extracellular. Residues 610–630 (VITIVVCAIVTTLISISLLFG) traverse the membrane as a helical segment. Over 631 to 798 (SKFYMMATQG…NQSEIDPDDV (168 aa)) the chain is Cytoplasmic. Positions 714–771 (AEQDSKLDLENQNDENEIENNQNNQNNIVEDCQKVEKLEKDENLEKDENLEKDENLEK) form a coiled coil. Residues 752–774 (EKDENLEKDENLEKDENLEKDNE) show a composition bias toward basic and acidic residues. The tract at residues 752–798 (EKDENLEKDENLEKDENLEKDNENQSIIQKKRLSKNFNQSEIDPDDV) is disordered.

It in the N-terminal section; belongs to the BMP lipoprotein family. In the C-terminal section; belongs to the G-protein coupled receptor 3 family. GABA-B receptor subfamily.

The protein resides in the membrane. The protein localises to the cytoplasm. It localises to the cell cortex. It is found in the perinuclear region. May play an important role in the terminal differentiation. This Dictyostelium discoideum (Social amoeba) protein is Metabotropic glutamate receptor-like protein A (grlA).